The primary structure comprises 394 residues: Phosphopentomutase (394 aa).

Mn(2+) is bound by residues Asp14, Asp287, His292, Asp328, His329, and His340.

This sequence belongs to the phosphopentomutase family. Requires Mn(2+) as cofactor.

The protein localises to the cytoplasm. It carries out the reaction 2-deoxy-alpha-D-ribose 1-phosphate = 2-deoxy-D-ribose 5-phosphate. The catalysed reaction is alpha-D-ribose 1-phosphate = D-ribose 5-phosphate. It functions in the pathway carbohydrate degradation; 2-deoxy-D-ribose 1-phosphate degradation; D-glyceraldehyde 3-phosphate and acetaldehyde from 2-deoxy-alpha-D-ribose 1-phosphate: step 1/2. Functionally, isomerase that catalyzes the conversion of deoxy-ribose 1-phosphate (dRib-1-P) and ribose 1-phosphate (Rib-1-P) to deoxy-ribose 5-phosphate (dRib-5-P) and ribose 5-phosphate (Rib-5-P), respectively. The polypeptide is Phosphopentomutase (Listeria monocytogenes serovar 1/2a (strain ATCC BAA-679 / EGD-e)).